The primary structure comprises 117 residues: Ribonuclease P protein component (117 aa).

The protein belongs to the RnpA family. Consists of a catalytic RNA component (M1 or rnpB) and a protein subunit.

The catalysed reaction is Endonucleolytic cleavage of RNA, removing 5'-extranucleotides from tRNA precursor.. Functionally, RNaseP catalyzes the removal of the 5'-leader sequence from pre-tRNA to produce the mature 5'-terminus. It can also cleave other RNA substrates such as 4.5S RNA. The protein component plays an auxiliary but essential role in vivo by binding to the 5'-leader sequence and broadening the substrate specificity of the ribozyme. This Aliivibrio fischeri (strain ATCC 700601 / ES114) (Vibrio fischeri) protein is Ribonuclease P protein component.